The sequence spans 346 residues: tRNA(Ile)-lysidine synthase (346 aa).

ATP is bound at residue 32 to 37 (SGGPDS).

Belongs to the tRNA(Ile)-lysidine synthase family.

It is found in the cytoplasm. The enzyme catalyses cytidine(34) in tRNA(Ile2) + L-lysine + ATP = lysidine(34) in tRNA(Ile2) + AMP + diphosphate + H(+). In terms of biological role, ligates lysine onto the cytidine present at position 34 of the AUA codon-specific tRNA(Ile) that contains the anticodon CAU, in an ATP-dependent manner. Cytidine is converted to lysidine, thus changing the amino acid specificity of the tRNA from methionine to isoleucine. The sequence is that of tRNA(Ile)-lysidine synthase from Rhodopseudomonas palustris (strain ATCC BAA-98 / CGA009).